Here is a 347-residue protein sequence, read N- to C-terminus: Protein POOR HOMOLOGOUS SYNAPSIS 1 (347 aa).

The protein resides in the cytoplasm. Functionally, required for accurate chromosome segregation in meiosis. Required for pairing to occur between homologous chromosomes. Acts in early recombination steps and ensures pairing fidelity and proper repair of meiotic DNA double-strand-breaks. Regulates recombination and pairing of homologous chromosomes during meiotic prophase by controlling transport of RAD50 from cytoplasm to the nucleus. May affect pairing of the gene-rich fraction of the genome rather than preventing pairing between repetitive DNA elements. The sequence is that of Protein POOR HOMOLOGOUS SYNAPSIS 1 from Zea mays (Maize).